A 147-amino-acid polypeptide reads, in one-letter code: Ribosome maturation factor RimP (147 aa).

The protein belongs to the RimP family.

The protein resides in the cytoplasm. Required for maturation of 30S ribosomal subunits. This is Ribosome maturation factor RimP from Legionella pneumophila (strain Paris).